The primary structure comprises 298 residues: Type II methyltransferase M.MjaIV (298 aa).

The enzyme catalyses a 2'-deoxyadenosine in DNA + S-adenosyl-L-methionine = an N(6)-methyl-2'-deoxyadenosine in DNA + S-adenosyl-L-homocysteine + H(+). A methylase that recognizes the double-stranded sequence 5'-GTNNAC-3', methylates A-5 on both strands, and protects the DNA from cleavage by the MjaIV endonuclease. In Methanocaldococcus jannaschii (strain ATCC 43067 / DSM 2661 / JAL-1 / JCM 10045 / NBRC 100440) (Methanococcus jannaschii), this protein is Type II methyltransferase M.MjaIV (mjaIVMP).